The sequence spans 572 residues: Sorting nexin 2B (572 aa).

Disordered stretches follow at residues 1–97 (MMGS…SSYL) and 114–136 (SEIN…SPSS). The span at 9 to 30 (ESHLHSSKEEMEKLFLREDGDP) shows a compositional bias: basic and acidic residues. Positions 32-53 (TKSNVNGDKSNSNYRSAMSTLF) are enriched in polar residues. Low complexity predominate over residues 124 to 136 (SQSSDSLSRSPSS). S133 is modified (phosphoserine). The region spanning 147–266 (SNPQKEQEAT…KVFLQAQGKL (120 aa)) is the PX domain. The a 1,2-diacyl-sn-glycero-3-phospho-(1D-myo-inositol-3-phosphate) site is built by R190, K216, and R233. A BAR domain is found at 318–572 (LRQSVSNDWG…ETRQYDRESS (255 aa)).

The protein belongs to the sorting nexin family. In terms of assembly, homodimer. Heterodimer with SNX1 or SNX2B. Component of the retromer complex which consists of VPS29 (MAG1), VPS26 (VPS26A or VPS26B), VPS35 (VPS35A or VPS35B or VPS35C), VPS5/17 (SNX1 or SNX2A or SNX2B). In terms of tissue distribution, ubiquitously expressed.

The protein resides in the cytoplasm. The protein localises to the endosome membrane. It is found in the prevacuolar compartment membrane. Its subcellular location is the golgi apparatus. It localises to the trans-Golgi network membrane. In terms of biological role, plays a role in vesicular protein sorting. Acts at the crossroads between the secretory and endocytic pathways. Is involved in the endosome to vacuole protein transport and, as component of the membrane-associated retromer complex, is also involved in endosome-to-Golgi retrograde transport. The polypeptide is Sorting nexin 2B (SNX2B) (Arabidopsis thaliana (Mouse-ear cress)).